The sequence spans 549 residues: Protein wntless homolog (549 aa).

A signal peptide spans 1 to 34; sequence MAGGAVIENLSNRKLFVIFAGLLVIQIMFFLIGA. The Lumenal portion of the chain corresponds to 36–236; that stretch reads YAPSPSSYME…RLIEIHQNGG (201 aa). Residues 237-257 traverse the membrane as a helical segment; that stretch reads FTLVWLWTKTFMTPVVAICLW. At 258–275 the chain is on the cytoplasmic side; that stretch reads WYYNRINQLARNPLLLER. Residues 276–296 traverse the membrane as a helical segment; the sequence is AILLLGLSLVILDFPIEWISL. The Lumenal segment spans residues 297–310; the sequence is TYRIPFLLLISDLR. Residues 311–331 form a helical membrane-spanning segment; the sequence is QGLFYTVLFSFWLIFAGEHLI. Residues 332 to 345 are Cytoplasmic-facing; sequence DDNTRNNLKSYRFN. Residues 346–366 traverse the membrane as a helical segment; it reads LSFIITASLGLLIYDLIERGI. Over 367–383 the chain is Lumenal; that stretch reads QLYDPFYSVWSSPTGSQ. Residues 384–404 form a helical membrane-spanning segment; it reads IAYFAIFISAISTVAYFIFLF. Over 405-439 the chain is Cytoplasmic; that stretch reads FKIARVWSTIKSKRSAQIYQTSENRRLKVEGVIYR. Residues 440–460 traverse the membrane as a helical segment; sequence FKFLMLFTLLCSAFTIAAYFM. At 461-483 the chain is on the lumenal side; the sequence is KQYGEAQLHGDEARDGFLTGSTS. The helical transmembrane segment at 484–504 threads the bilayer; the sequence is AFFTGAFGMCNIYVLLLLAMY. Over 505–549 the chain is Cytoplasmic; it reads APSHKHYRGASQLIDENDDDEIMEDPSNQHTESNAMTTFLKPSTD. Residues 524–549 form a disordered region; that stretch reads DEIMEDPSNQHTESNAMTTFLKPSTD. Residues 530–549 show a composition bias toward polar residues; it reads PSNQHTESNAMTTFLKPSTD.

Belongs to the wntless family. Expressed in the tail hypodermis, stomatointestinal muscle, the mesoblast cell M and its descendants, CAN neurons, the developing vulva, the pharynx and the pharyngeal intestinal valve.

Its subcellular location is the cell membrane. It is found in the early endosome membrane. The protein resides in the golgi apparatus membrane. It localises to the basal cell membrane. The protein localises to the late endosome membrane. Probable sorting receptor which regulates endocytosis and secretion of the wnt ligand egl-20. Recycling of mig-14 from the plasma membrane to the Golgi apparatus by the retromer complex is essential for its function. Its endosomal trafficking is regulated by its association with sorting nexin snx-3 on early endosomes and the mtm-6/mtm-9 myotubularin complex. Required in embryonic development for endoderm specification and the correct positioning and orientation of the mitotic spindles and division planes in blastomere cells. Functions during vulval development, playing a role in vulval precursor cell fate specification. During development, specifically regulates the migration of HSN neurons, the left Q neuroblast (QL) and its descendants and the distal tip cells of the gonads. Positioning of Q neuroblasts may be both dependent and independent of hox gene mab-5. Involved in establishing ALM and PLM neuronal cell polarity. This is Protein wntless homolog from Caenorhabditis elegans.